The primary structure comprises 572 residues: Proline--tRNA ligase (572 aa).

The protein belongs to the class-II aminoacyl-tRNA synthetase family. ProS type 1 subfamily. Homodimer.

The protein localises to the cytoplasm. The catalysed reaction is tRNA(Pro) + L-proline + ATP = L-prolyl-tRNA(Pro) + AMP + diphosphate. Its function is as follows. Catalyzes the attachment of proline to tRNA(Pro) in a two-step reaction: proline is first activated by ATP to form Pro-AMP and then transferred to the acceptor end of tRNA(Pro). As ProRS can inadvertently accommodate and process non-cognate amino acids such as alanine and cysteine, to avoid such errors it has two additional distinct editing activities against alanine. One activity is designated as 'pretransfer' editing and involves the tRNA(Pro)-independent hydrolysis of activated Ala-AMP. The other activity is designated 'posttransfer' editing and involves deacylation of mischarged Ala-tRNA(Pro). The misacylated Cys-tRNA(Pro) is not edited by ProRS. The protein is Proline--tRNA ligase of Edwardsiella ictaluri (strain 93-146).